The following is a 253-amino-acid chain: tRNA pseudouridine synthase A (253 aa).

The Nucleophile role is filled by aspartate 52. Tyrosine 110 contributes to the substrate binding site.

Belongs to the tRNA pseudouridine synthase TruA family. As to quaternary structure, homodimer.

It catalyses the reaction uridine(38/39/40) in tRNA = pseudouridine(38/39/40) in tRNA. Formation of pseudouridine at positions 38, 39 and 40 in the anticodon stem and loop of transfer RNAs. The sequence is that of tRNA pseudouridine synthase A from Thermus thermophilus (strain ATCC BAA-163 / DSM 7039 / HB27).